We begin with the raw amino-acid sequence, 189 residues long: Xanthine phosphoribosyltransferase (189 aa).

2 residues coordinate xanthine: Leu20 and Asn27. Ala128–Ala132 contributes to the 5-phospho-alpha-D-ribose 1-diphosphate binding site. Residue Lys156 coordinates xanthine.

This sequence belongs to the purine/pyrimidine phosphoribosyltransferase family. Xpt subfamily. Homodimer.

It is found in the cytoplasm. The enzyme catalyses XMP + diphosphate = xanthine + 5-phospho-alpha-D-ribose 1-diphosphate. The protein operates within purine metabolism; XMP biosynthesis via salvage pathway; XMP from xanthine: step 1/1. In terms of biological role, converts the preformed base xanthine, a product of nucleic acid breakdown, to xanthosine 5'-monophosphate (XMP), so it can be reused for RNA or DNA synthesis. The polypeptide is Xanthine phosphoribosyltransferase (Leuconostoc mesenteroides subsp. mesenteroides (strain ATCC 8293 / DSM 20343 / BCRC 11652 / CCM 1803 / JCM 6124 / NCDO 523 / NBRC 100496 / NCIMB 8023 / NCTC 12954 / NRRL B-1118 / 37Y)).